Reading from the N-terminus, the 319-residue chain is Large ribosomal subunit protein uL10 (319 aa).

Residues 286–319 form a disordered region; that stretch reads AGDSGASAAPKEEEKAAEPEEESDEEMGFSLFDD. Residues 304-319 are compositionally biased toward acidic residues; the sequence is PEEESDEEMGFSLFDD.

The protein belongs to the universal ribosomal protein uL10 family. P0 forms a pentameric complex by interaction with dimers of P1 and P2. Post-translationally, phosphorylated.

Functionally, ribosomal protein P0 is the functional equivalent of E.coli protein L10. The chain is Large ribosomal subunit protein uL10 (RP-P0) from Zea mays (Maize).